We begin with the raw amino-acid sequence, 154 residues long: MKPRQKRLVLIVGIVAAVGVAAALVLNAFQSNLVFFYSPAQVAAKEAPVGRAFRLGGLVDGGSVQRDGLVVRFVVTDTVKSIPVRYQGILPDLFKEGKGVVAQGQLGDDGVFVAREVLAKHDENYMPPEAAEALQRAGASNQKLGETVVKETRP.

The Cytoplasmic segment spans residues 1–7; sequence MKPRQKR. The chain crosses the membrane as a helical; Signal-anchor for type II membrane protein span at residues 8 to 28; that stretch reads LVLIVGIVAAVGVAAALVLNA. Residues 29–154 are Periplasmic-facing; the sequence is FQSNLVFFYS…GETVVKETRP (126 aa). Residues His-121 and Tyr-125 each contribute to the heme site. The disordered stretch occupies residues 131–154; that stretch reads AEALQRAGASNQKLGETVVKETRP.

Belongs to the CcmE/CycJ family.

Its subcellular location is the cell inner membrane. Functionally, heme chaperone required for the biogenesis of c-type cytochromes. Transiently binds heme delivered by CcmC and transfers the heme to apo-cytochromes in a process facilitated by CcmF and CcmH. This is Cytochrome c-type biogenesis protein CcmE from Methylibium petroleiphilum (strain ATCC BAA-1232 / LMG 22953 / PM1).